Reading from the N-terminus, the 599-residue chain is ATP-dependent rRNA helicase SPB4 (599 aa).

The Q motif motif lies at 7-35; it reads WDTLDYTLQPWIRTAVDAMGYETMTPVQA. Positions 38 to 224 constitute a Helicase ATP-binding domain; the sequence is IPLFARNKDV…KTGMRNPVKV (187 aa). ATP is bound at residue 51–58; the sequence is SVTGSGKT. Positions 172 to 175 match the DEAD box motif; that stretch reads DEAD. A Helicase C-terminal domain is found at 248–415; that stretch reads KLQLLLTLLN…GLPEIIRAWI (168 aa). A coiled-coil region spans residues 501-561; the sequence is QREKARKLAK…LKRKAIEEKL (61 aa). The interval 559–599 is disordered; the sequence is EKLIENSDDSDNEVETDWKDIVRQRKKKKTNSGMQGDFGDL. Over residues 564 to 573 the composition is skewed to acidic residues; it reads NSDDSDNEVE.

Belongs to the DEAD box helicase family. DDX55/SPB4 subfamily. In terms of assembly, component of pre-60S ribosomal complexes.

It localises to the nucleus. The protein resides in the nucleolus. The catalysed reaction is ATP + H2O = ADP + phosphate + H(+). Functionally, ATP-binding RNA helicase involved in the biogenesis of 60S ribosomal subunits. Binds 90S pre-ribosomal particles and dissociates from pre-60S ribosomal particles after processing of 27SB pre-rRNA. Required for the normal formation of 18S rRNA through the processing of pre-rRNAs at sites A0, A1 and A2, and the normal formation of 25S and 5.8S rRNAs through the processing of pre-rRNAs at sites C1 and C2. This chain is ATP-dependent rRNA helicase SPB4, found in Eremothecium gossypii (strain ATCC 10895 / CBS 109.51 / FGSC 9923 / NRRL Y-1056) (Yeast).